The primary structure comprises 467 residues: Cobyrinate a,c-diamide synthase (467 aa).

Positions 256–449 constitute a GATase cobBQ-type domain; it reads RVGYAADQAF…AHIHVEGAPE (194 aa). Cysteine 338 serves as the catalytic Nucleophile.

This sequence belongs to the CobB/CbiA family. The cofactor is Mg(2+).

The catalysed reaction is cob(II)yrinate + 2 L-glutamine + 2 ATP + 2 H2O = cob(II)yrinate a,c diamide + 2 L-glutamate + 2 ADP + 2 phosphate + 2 H(+). It participates in cofactor biosynthesis; adenosylcobalamin biosynthesis; cob(II)yrinate a,c-diamide from sirohydrochlorin (anaerobic route): step 10/10. In terms of biological role, catalyzes the ATP-dependent amidation of the two carboxylate groups at positions a and c of cobyrinate, using either L-glutamine or ammonia as the nitrogen source. The protein is Cobyrinate a,c-diamide synthase of Magnetococcus marinus (strain ATCC BAA-1437 / JCM 17883 / MC-1).